The sequence spans 251 residues: 2,3-bisphosphoglycerate-dependent phosphoglycerate mutase (251 aa).

Residues 13 to 20, 26 to 27, R65, 92 to 95, K103, 119 to 120, and 186 to 187 contribute to the substrate site; these read RHGESEWN, TG, ERHY, RR, and GN. Catalysis depends on H14, which acts as the Tele-phosphohistidine intermediate. E92 (proton donor/acceptor) is an active-site residue.

It belongs to the phosphoglycerate mutase family. BPG-dependent PGAM subfamily.

It catalyses the reaction (2R)-2-phosphoglycerate = (2R)-3-phosphoglycerate. It participates in carbohydrate degradation; glycolysis; pyruvate from D-glyceraldehyde 3-phosphate: step 3/5. Functionally, catalyzes the interconversion of 2-phosphoglycerate and 3-phosphoglycerate. This is 2,3-bisphosphoglycerate-dependent phosphoglycerate mutase from Rhodococcus opacus (strain B4).